The chain runs to 1210 residues: ATPase family AAA domain-containing protein At1g05910 (1210 aa).

Positions 1–11 are enriched in polar residues; it reads MHPKRSSQGDG. 2 disordered regions span residues 1–32 and 63–291; these read MHPKRSSQGDGSVTKPVRTSDRLRRRPKLHGR and LHKG…RTDD. The span at 97–109 shows a compositional bias: acidic residues; that stretch reads DYTDSSGAEDEDM. The span at 130 to 146 shows a compositional bias: basic and acidic residues; sequence SRKDMDAELAPRREGLR. Residues 167–226 are compositionally biased toward acidic residues; the sequence is DTSEEKDGQDETENGNELDDADDGENEVEAEDEGNGEDEGDGEDEGEEDGDDDEEGDEEQ. Over residues 227 to 244 the composition is skewed to basic and acidic residues; sequence EGRKRYDLRNRAEVRRMP. Positions 276–286 are enriched in basic residues; sequence GGSRPHKRHRF. 422–429 is an ATP binding site; that stretch reads GPPGTGKT. The tract at residues 856-883 is disordered; sequence LNGKPDGPQPLPELPKVPKEPTGPKPAE. The region spanning 897–1000 is the Bromo domain; that stretch reads RLRMCLRDVC…DVVHGMLSQM (104 aa). Positions 1057 to 1070 are enriched in basic and acidic residues; that stretch reads DRDYEGLKKPKKTT. A disordered region spans residues 1057–1151; sequence DRDYEGLKKP…EISSRTESVK (95 aa). Over residues 1080–1090 the composition is skewed to polar residues; it reads DKSQNQDSGQE. 2 stretches are compositionally biased toward basic and acidic residues: residues 1108-1123 and 1138-1151; these read DGDREDQSEPPSKEAS and KSDKEISSRTESVK.

This sequence belongs to the AAA ATPase family.

This Arabidopsis thaliana (Mouse-ear cress) protein is ATPase family AAA domain-containing protein At1g05910.